The primary structure comprises 538 residues: Interleukin-21 receptor (538 aa).

A signal peptide spans Met1 to Gly19. 3 disulfides stabilise this stretch: Cys20–Cys109, Cys25–Cys35, and Cys65–Cys81. Over Cys20–Glu232 the chain is Extracellular. 2 consecutive Fibronectin type-III domains span residues Pro21–Ile118 and Lys119–Glu228. 5 N-linked (GlcNAc...) asparagine glycosylation sites follow: Asn73, Asn97, Asn104, Asn125, and Asn135. A glycan (C-linked (Man) tryptophan) is linked at Trp214. Positions Trp214–Ser218 match the WSXWS motif motif. The helical transmembrane segment at Gly233–Trp253 threads the bilayer. Over Ser254–Ser538 the chain is Cytoplasmic. The short motif at Lys266–Glu274 is the Box 1 motif element. 2 disordered regions span residues Glu342–Arg367 and Glu457–Met487.

This sequence belongs to the type I cytokine receptor family. Type 4 subfamily. In terms of assembly, heterodimer with the common gamma subunit. Associates with JAK1. In terms of processing, C-mannosylated at Trp-214 in the WSXWS motif, the sugar chain makes extensive hydrogen bonds with Asn-73 sugar, and bridges the two fibronectin domains transforming the V-shaped receptor into an A-frame. Selectively expressed in lymphoid tissues. Most highly expressed in thymus and spleen.

The protein resides in the membrane. Its function is as follows. This is a receptor for interleukin-21. The protein is Interleukin-21 receptor (IL21R) of Homo sapiens (Human).